Reading from the N-terminus, the 296-residue chain is NAD kinase (296 aa).

The Proton acceptor role is filled by Asp78. NAD(+) is bound by residues Asp78–Gly79, Asn152–Asp153, Arg180, Asp182, and Gln251.

Belongs to the NAD kinase family. It depends on a divalent metal cation as a cofactor.

The protein localises to the cytoplasm. The catalysed reaction is NAD(+) + ATP = ADP + NADP(+) + H(+). Functionally, involved in the regulation of the intracellular balance of NAD and NADP, and is a key enzyme in the biosynthesis of NADP. Catalyzes specifically the phosphorylation on 2'-hydroxyl of the adenosine moiety of NAD to yield NADP. The polypeptide is NAD kinase (Neisseria gonorrhoeae (strain ATCC 700825 / FA 1090)).